The following is a 264-amino-acid chain: Probable transcriptional regulatory protein PPA1157 (264 aa).

The protein belongs to the TACO1 family.

The protein resides in the cytoplasm. The polypeptide is Probable transcriptional regulatory protein PPA1157 (Cutibacterium acnes (strain DSM 16379 / KPA171202) (Propionibacterium acnes)).